A 688-amino-acid chain; its full sequence is DNA ligase (688 aa).

NAD(+)-binding positions include 51 to 55 (DSEYD), 100 to 101 (SL), and Glu129. The N6-AMP-lysine intermediate role is filled by Lys131. 4 residues coordinate NAD(+): Arg152, Glu189, Lys308, and Lys332. Residues Cys426, Cys429, Cys444, and Cys450 each coordinate Zn(2+). Residues 609–688 (ADEQPLKGQT…DELLALLANS (80 aa)) enclose the BRCT domain.

The protein belongs to the NAD-dependent DNA ligase family. LigA subfamily. Mg(2+) serves as cofactor. Requires Mn(2+) as cofactor.

The catalysed reaction is NAD(+) + (deoxyribonucleotide)n-3'-hydroxyl + 5'-phospho-(deoxyribonucleotide)m = (deoxyribonucleotide)n+m + AMP + beta-nicotinamide D-nucleotide.. Its function is as follows. DNA ligase that catalyzes the formation of phosphodiester linkages between 5'-phosphoryl and 3'-hydroxyl groups in double-stranded DNA using NAD as a coenzyme and as the energy source for the reaction. It is essential for DNA replication and repair of damaged DNA. In Shewanella sp. (strain MR-4), this protein is DNA ligase.